Reading from the N-terminus, the 299-residue chain is tRNA-cytidine(32) 2-sulfurtransferase (299 aa).

Residues 56–61 carry the PP-loop motif motif; sequence SGGKDS. 3 residues coordinate [4Fe-4S] cluster: Cys-131, Cys-134, and Cys-222.

The protein belongs to the TtcA family. In terms of assembly, homodimer. The cofactor is Mg(2+). [4Fe-4S] cluster is required as a cofactor.

The protein resides in the cytoplasm. It catalyses the reaction cytidine(32) in tRNA + S-sulfanyl-L-cysteinyl-[cysteine desulfurase] + AH2 + ATP = 2-thiocytidine(32) in tRNA + L-cysteinyl-[cysteine desulfurase] + A + AMP + diphosphate + H(+). The protein operates within tRNA modification. Its function is as follows. Catalyzes the ATP-dependent 2-thiolation of cytidine in position 32 of tRNA, to form 2-thiocytidine (s(2)C32). The sulfur atoms are provided by the cysteine/cysteine desulfurase (IscS) system. The polypeptide is tRNA-cytidine(32) 2-sulfurtransferase (Xylella fastidiosa (strain 9a5c)).